We begin with the raw amino-acid sequence, 318 residues long: Aspartate carbamoyltransferase catalytic subunit (318 aa).

Positions 59 and 60 each coordinate carbamoyl phosphate. Lys87 is a binding site for L-aspartate. Residues Arg109, His137, and Gln140 each coordinate carbamoyl phosphate. 2 residues coordinate L-aspartate: Arg170 and Arg224. Residues Gly265 and Pro266 each coordinate carbamoyl phosphate.

This sequence belongs to the aspartate/ornithine carbamoyltransferase superfamily. ATCase family. As to quaternary structure, heterododecamer (2C3:3R2) of six catalytic PyrB chains organized as two trimers (C3), and six regulatory PyrI chains organized as three dimers (R2).

It catalyses the reaction carbamoyl phosphate + L-aspartate = N-carbamoyl-L-aspartate + phosphate + H(+). The protein operates within pyrimidine metabolism; UMP biosynthesis via de novo pathway; (S)-dihydroorotate from bicarbonate: step 2/3. Its function is as follows. Catalyzes the condensation of carbamoyl phosphate and aspartate to form carbamoyl aspartate and inorganic phosphate, the committed step in the de novo pyrimidine nucleotide biosynthesis pathway. The chain is Aspartate carbamoyltransferase catalytic subunit from Rhizobium rhizogenes (strain K84 / ATCC BAA-868) (Agrobacterium radiobacter).